The primary structure comprises 341 residues: ATP-dependent 6-phosphofructokinase 2 (341 aa).

Residues Gly-10, 72 to 73, and 102 to 105 each bind ATP; these read RL and GEGT. Position 103 (Glu-103) interacts with Mg(2+). Residues 125–127, Arg-162, 169–171, Glu-222, Lys-266, and 272–275 contribute to the substrate site; these read TID, MGR, and HVQR. Asp-127 acts as the Proton acceptor in catalysis.

It belongs to the phosphofructokinase type A (PFKA) family. Mixed-substrate PFK group III subfamily. As to quaternary structure, homodimer or homotetramer. Mg(2+) serves as cofactor.

It localises to the cytoplasm. It carries out the reaction beta-D-fructose 6-phosphate + ATP = beta-D-fructose 1,6-bisphosphate + ADP + H(+). It participates in carbohydrate degradation; glycolysis; D-glyceraldehyde 3-phosphate and glycerone phosphate from D-glucose: step 3/4. Its activity is regulated as follows. Allosterically inhibited by phosphoenolpyruvate. In terms of biological role, catalyzes the phosphorylation of D-fructose 6-phosphate to fructose 1,6-bisphosphate by ATP, the first committing step of glycolysis. The chain is ATP-dependent 6-phosphofructokinase 2 from Streptomyces coelicolor (strain ATCC BAA-471 / A3(2) / M145).